The primary structure comprises 721 residues: Polyribonucleotide nucleotidyltransferase (721 aa).

Asp-511 and Asp-517 together coordinate Mg(2+). Positions 577-637 (PSTDFFHINP…SGVQAAREHI (61 aa)) constitute a KH domain. The 68-residue stretch at 654–721 (GDIHKGIVKK…KGNKISLGIA (68 aa)) folds into the S1 motif domain.

It belongs to the polyribonucleotide nucleotidyltransferase family. Mg(2+) serves as cofactor.

It localises to the cytoplasm. The catalysed reaction is RNA(n+1) + phosphate = RNA(n) + a ribonucleoside 5'-diphosphate. In terms of biological role, involved in mRNA degradation. Catalyzes the phosphorolysis of single-stranded polyribonucleotides processively in the 3'- to 5'-direction. The protein is Polyribonucleotide nucleotidyltransferase of Sulfurimonas denitrificans (strain ATCC 33889 / DSM 1251) (Thiomicrospira denitrificans (strain ATCC 33889 / DSM 1251)).